Reading from the N-terminus, the 64-residue chain is Alpha-conotoxin-like Ac1.1a (64 aa).

An N-terminal signal peptide occupies residues 1–21 (MGMRMMFTLFLLVVLTTTVVS). The propeptide occupies 22–47 (YPSDSASDGRDDEAKDERSDMYELKR). 2 cysteine pairs are disulfide-bonded: Cys51–Cys56 and Cys52–Cys62. Position 62 is a cysteine amide (Cys62).

It belongs to the conotoxin A superfamily. As to expression, expressed by the venom duct.

The protein resides in the secreted. In terms of biological role, alpha-conotoxins act on postsynaptic membranes, they bind to the nicotinic acetylcholine receptors (nAChR) and thus inhibit them. The protein is Alpha-conotoxin-like Ac1.1a of Conus achatinus (Little frog cone).